The chain runs to 469 residues: MSKRSKGKILRVIGPVVDVQFEEGELPDIYDALEVINPQTGKKLILEVEQLIGDNAVRTVALDTTDGLMRGLEVENTGEPIKVPVGKGALGRMFNVIGEPIDGKEDVKDVEYWPIHRTPPSITEQSTSVEILETGIKVIDLLAPFPKGGKIGFFGGAGVGKTVLVMELIRNIAIEHHGFSMFAGVGERTREGNELYLDMQEAEVLDNTVLVFGQMNEPPGARFRVALSALTMAEYFRDVEGRDVLLFIDNIFRFVQAGSEVSALLGRMPSAVGYQPTLATDMGELQERITSTKKGSITSVQAIYVPADDITDPAPATTFTHLDATVVLSRRRAALGLYPAVDPLDSTSKMLDPNVVGQEHYEVARGVQEVLQRYKDLQDIIAILGMEELSEEDKLIVQRARKIERFLSQPVHVAEKFSNIPGKYVPISETIRGFKEILEGKYDDLPEMAFYMVGTIDEAVEKAKKLQKA.

155-162 serves as a coordination point for ATP; sequence GGAGVGKT.

This sequence belongs to the ATPase alpha/beta chains family. As to quaternary structure, F-type ATPases have 2 components, CF(1) - the catalytic core - and CF(0) - the membrane proton channel. CF(1) has five subunits: alpha(3), beta(3), gamma(1), delta(1), epsilon(1). CF(0) has three main subunits: a(1), b(2) and c(9-12). The alpha and beta chains form an alternating ring which encloses part of the gamma chain. CF(1) is attached to CF(0) by a central stalk formed by the gamma and epsilon chains, while a peripheral stalk is formed by the delta and b chains.

The protein localises to the cell inner membrane. It catalyses the reaction ATP + H2O + 4 H(+)(in) = ADP + phosphate + 5 H(+)(out). Functionally, produces ATP from ADP in the presence of a proton gradient across the membrane. The catalytic sites are hosted primarily by the beta subunits. This chain is ATP synthase subunit beta, found in Thermosipho melanesiensis (strain DSM 12029 / CIP 104789 / BI429).